The primary structure comprises 384 residues: MELHNLSSPSPSLSSSVLPPSFSPSPSSAPSAFTTVGGSSGGPCHPTSSSLVSAFLAPILALEFVLGLVGNSLALFIFCIHTRPWTSNTVFLVSLVAADFLLISNLPLRVDYYLLHETWRFGAAACKVNLFMLSTNRTASVVFLTAIALNRYLKVVQPHHVLSRASVGAAARVAGGLWVGILLLNGHLLLSTFSGPSCLSYRVGTKPSASLRWHQALYLLEFFLPLALILFAIVSIGLTIRNRGLGGQAGPQRAMRVLAMVVAVYTICFLPSIIFGMASMVAFWLSACRSLDLCTQLFHGSLAFTYLNSVLDPVLYCFSSPNFLHQSRALLGLTRGRQGPVSDESSYQPSRQWRYREASRKAEAIGKLKVQGEVSLEKEGSSQG.

Positions 1–21 (MELHNLSSPSPSLSSSVLPPS) are disordered. Topologically, residues 1 to 58 (MELHNLSSPSPSLSSSVLPPSFSPSPSSAPSAFTTVGGSSGGPCHPTSSSLVSAFLAP) are extracellular. An N-linked (GlcNAc...) asparagine glycan is attached at Asn-5. The segment covering 7-21 (SSPSPSLSSSVLPPS) has biased composition (low complexity). The helical transmembrane segment at 59–79 (ILALEFVLGLVGNSLALFIFC) threads the bilayer. At 80–87 (IHTRPWTS) the chain is on the cytoplasmic side. Residues 88–108 (NTVFLVSLVAADFLLISNLPL) form a helical membrane-spanning segment. The Extracellular segment spans residues 109 to 129 (RVDYYLLHETWRFGAAACKVN). Residues Cys-126 and Cys-198 are joined by a disulfide bond. Residues 130 to 152 (LFMLSTNRTASVVFLTAIALNRY) traverse the membrane as a helical segment. Topologically, residues 153–172 (LKVVQPHHVLSRASVGAAAR) are cytoplasmic. A helical transmembrane segment spans residues 173–193 (VAGGLWVGILLLNGHLLLSTF). Residues 194–215 (SGPSCLSYRVGTKPSASLRWHQ) lie on the Extracellular side of the membrane. The helical transmembrane segment at 216–236 (ALYLLEFFLPLALILFAIVSI) threads the bilayer. Residues 237–256 (GLTIRNRGLGGQAGPQRAMR) are Cytoplasmic-facing. The chain crosses the membrane as a helical span at residues 257–277 (VLAMVVAVYTICFLPSIIFGM). At 278–297 (ASMVAFWLSACRSLDLCTQL) the chain is on the extracellular side. Residues 298–318 (FHGSLAFTYLNSVLDPVLYCF) form a helical membrane-spanning segment. At 319-384 (SSPNFLHQSR…SLEKEGSSQG (66 aa)) the chain is on the cytoplasmic side.

It belongs to the G-protein coupled receptor 1 family. As to expression, expressed in various tissues except brain. Expression is more intense in liver, kidney, peripheral leukocyte, lung, and spleen than in other tissues. Highly expressed in eosinophils, neutrophils, and lung macrophages.

The protein localises to the membrane. Functionally, receptor for eicosanoids and polyunsaturated fatty acids such as 5-oxo-6E,8Z,11Z,14Z-eicosatetraenoic acid (5-OXO-ETE), 5(S)-hydroperoxy-6E,8Z,11Z,14Z-eicosatetraenoic acid (5(S)-HPETE) and arachidonic acid. Seems to be coupled to the G(i)/G(o), families of heteromeric G proteins. This Homo sapiens (Human) protein is Oxoeicosanoid receptor 1 (OXER1).